The primary structure comprises 336 residues: Ketol-acid reductoisomerase (NADP(+)) (336 aa).

The region spanning 1 to 182 (MAVIYYDKDA…GVTRAGVIET (182 aa)) is the KARI N-terminal Rossmann domain. Residues 25–28 (YGSQ), Arg-48, Ser-51, Ser-53, and 83–86 (DEHQ) each bind NADP(+). The active site involves His-108. Gly-134 lines the NADP(+) pocket. Residues 183 to 328 (TFKEETETDL…KELRKMMPWL (146 aa)) enclose the KARI C-terminal knotted domain. Positions 191, 195, 227, and 231 each coordinate Mg(2+). Ser-252 serves as a coordination point for substrate.

It belongs to the ketol-acid reductoisomerase family. The cofactor is Mg(2+).

It catalyses the reaction (2R)-2,3-dihydroxy-3-methylbutanoate + NADP(+) = (2S)-2-acetolactate + NADPH + H(+). The catalysed reaction is (2R,3R)-2,3-dihydroxy-3-methylpentanoate + NADP(+) = (S)-2-ethyl-2-hydroxy-3-oxobutanoate + NADPH + H(+). It functions in the pathway amino-acid biosynthesis; L-isoleucine biosynthesis; L-isoleucine from 2-oxobutanoate: step 2/4. Its pathway is amino-acid biosynthesis; L-valine biosynthesis; L-valine from pyruvate: step 2/4. In terms of biological role, involved in the biosynthesis of branched-chain amino acids (BCAA). Catalyzes an alkyl-migration followed by a ketol-acid reduction of (S)-2-acetolactate (S2AL) to yield (R)-2,3-dihydroxy-isovalerate. In the isomerase reaction, S2AL is rearranged via a Mg-dependent methyl migration to produce 3-hydroxy-3-methyl-2-ketobutyrate (HMKB). In the reductase reaction, this 2-ketoacid undergoes a metal-dependent reduction by NADPH to yield (R)-2,3-dihydroxy-isovalerate. In Thermotoga maritima (strain ATCC 43589 / DSM 3109 / JCM 10099 / NBRC 100826 / MSB8), this protein is Ketol-acid reductoisomerase (NADP(+)).